A 449-amino-acid chain; its full sequence is tRNA-2-methylthio-N(6)-dimethylallyladenosine synthase (449 aa).

The MTTase N-terminal domain occupies 3 to 124 (KMLYIKTYGC…LPTMLEKLDS (122 aa)). [4Fe-4S] cluster contacts are provided by Cys-12, Cys-48, Cys-87, Cys-163, Cys-167, and Cys-170. The region spanning 149-380 (KSPTVSGLVS…QAQLMQQQLE (232 aa)) is the Radical SAM core domain. In terms of domain architecture, TRAM spans 383 to 447 (QKLIGKVVPV…ASSLFGEVYA (65 aa)).

Belongs to the methylthiotransferase family. MiaB subfamily. As to quaternary structure, monomer. [4Fe-4S] cluster serves as cofactor.

The protein resides in the cytoplasm. The enzyme catalyses N(6)-dimethylallyladenosine(37) in tRNA + (sulfur carrier)-SH + AH2 + 2 S-adenosyl-L-methionine = 2-methylsulfanyl-N(6)-dimethylallyladenosine(37) in tRNA + (sulfur carrier)-H + 5'-deoxyadenosine + L-methionine + A + S-adenosyl-L-homocysteine + 2 H(+). Catalyzes the methylthiolation of N6-(dimethylallyl)adenosine (i(6)A), leading to the formation of 2-methylthio-N6-(dimethylallyl)adenosine (ms(2)i(6)A) at position 37 in tRNAs that read codons beginning with uridine. The protein is tRNA-2-methylthio-N(6)-dimethylallyladenosine synthase of Orientia tsutsugamushi (strain Ikeda) (Rickettsia tsutsugamushi).